The primary structure comprises 145 residues: Large ribosomal subunit protein uL13 (145 aa).

This sequence belongs to the universal ribosomal protein uL13 family. As to quaternary structure, part of the 50S ribosomal subunit.

In terms of biological role, this protein is one of the early assembly proteins of the 50S ribosomal subunit, although it is not seen to bind rRNA by itself. It is important during the early stages of 50S assembly. The sequence is that of Large ribosomal subunit protein uL13 from Bacillus velezensis (strain DSM 23117 / BGSC 10A6 / LMG 26770 / FZB42) (Bacillus amyloliquefaciens subsp. plantarum).